Reading from the N-terminus, the 567-residue chain is Thiol:disulfide interchange protein DsbD (567 aa).

The N-terminal stretch at 1–19 is a signal peptide; the sequence is MAQRIFTLILLLCSTSAFA. 2 disulfide bridges follow: Cys-122-Cys-128 and Cys-185-Cys-307. 8 helical membrane-spanning segments follow: residues 166–186, 211–231, 246–266, 299–319, 326–346, 360–380, 387–407, and 418–438; these read LPFSALWALLIGIGIAFTPCV, LLAFIYVQGMALTYTALGLVV, YVLIGLAIVFTLLALSMFGLF, IAGLICSPCTTAPLSAILLYI, WLGGGTLYLYALGMGLPLMLV, WMAHVKTAFGFVILALPVFLL, AWGLRLWSLLGVAFFGWAFIT, and IVQIILLAAALISVRPLQDWA. Positions 435–567 constitute a Thioredoxin domain; the sequence is QDWAFGSPSA…FSAHLHDRQP (133 aa). An intrachain disulfide couples Cys-482 to Cys-485.

Belongs to the thioredoxin family. DsbD subfamily.

The protein resides in the cell inner membrane. The enzyme catalyses [protein]-dithiol + NAD(+) = [protein]-disulfide + NADH + H(+). It carries out the reaction [protein]-dithiol + NADP(+) = [protein]-disulfide + NADPH + H(+). Its function is as follows. Required to facilitate the formation of correct disulfide bonds in some periplasmic proteins and for the assembly of the periplasmic c-type cytochromes. Acts by transferring electrons from cytoplasmic thioredoxin to the periplasm. This transfer involves a cascade of disulfide bond formation and reduction steps. This is Thiol:disulfide interchange protein DsbD from Salmonella paratyphi A (strain ATCC 9150 / SARB42).